Here is a 706-residue protein sequence, read N- to C-terminus: Choline transporter-like protein 2 (706 aa).

Over 1 to 33 (MGGERQHYYGKHGTPQKYDPTFKGPIYHRGCTD) the chain is Cytoplasmic. The residue at position 14 (T14) is a Phosphothreonine. The chain crosses the membrane as a helical span at residues 34–54 (VICCVFLLLAIVGYVAVGIIA). Residues 55-232 (WTHGDPRKVI…RIFEDYTVSW (178 aa)) are Extracellular-facing. N187 and N200 each carry an N-linked (GlcNAc...) asparagine glycan. The chain crosses the membrane as a helical span at residues 233–253 (YWIIIGLVIAMVLSLLFIILL). Residues 254–256 (RFL) are Cytoplasmic-facing. The chain crosses the membrane as a helical span at residues 257–277 (AGIMVWVMIVMVILVLGYGIF). Residues 278-315 (HCYMEYSRLRGEAGSDISLVDLGFQTDLRVYLHLRQTW) are Extracellular-facing. A helical transmembrane segment spans residues 316-336 (MAFMIILSILEVIIILLLIFL). Topologically, residues 337 to 364 (RKRILIAIALIKEASRAVGYVMCSMLYP) are cytoplasmic. A helical transmembrane segment spans residues 365–385 (LVTFLLLCLCIAYWASTAIFL). Topologically, residues 386–440 (STSNEAVYKIFSDTDCQAVGKTCNPENFSSSSEFHLCPGAHCQFAFYGGESTYHR) are extracellular. Residues 441-461 (ALLGLQIFNAFMFFWLANFVL) form a helical membrane-spanning segment. Topologically, residues 462 to 504 (ALGQVTLAGAFASYYWALKKPDDLPAFPLFSAFGRALRYHTGS) are cytoplasmic. A helical transmembrane segment spans residues 505–525 (LAFGSLLLAIVQIIRVMLEYL). Over 526–563 (DQRLKAAENKFAKFLMTCLKCCFWCLEKFIKFLNRNAY) the chain is Extracellular. A helical membrane pass occupies residues 564–584 (IMIAIYGTNFCTSARNAFFLL). Residues 585 to 599 (MRNIIRVAVLDKVTD) lie on the Cytoplasmic side of the membrane. A helical transmembrane segment spans residues 600–620 (FLFLLGKLLIVGSVGILAFFF). At 621–638 (FTHRIRIVQDTAPPLNYY) the chain is on the extracellular side. The helical transmembrane segment at 639–659 (WVPILTVIVGSYLIAHGFFSV) threads the bilayer. The Cytoplasmic segment spans residues 660 to 706 (YGMCVDTLFLCFLEDLERNDGSMERPYFMSPTLKRLLNKTNRKPAES).

Belongs to the CTL (choline transporter-like) family. In terms of assembly, interacts with COCH. N-glycosylated.

It localises to the cell membrane. Its subcellular location is the mitochondrion outer membrane. The enzyme catalyses choline(out) + n H(+)(in) = choline(in) + n H(+)(out). It carries out the reaction ethanolamine(out) + n H(+)(in) = ethanolamine(in) + n H(+)(out). Its function is as follows. Choline/H+ antiporter, mainly in mitochodria. Also acts as a low-affinity ethanolamine/H+ antiporter, regulating the supply of extracellular ethanolamine (Etn) for the CDP-Etn pathway, redistribute intracellular Etn and balance the CDP-Cho and CDP-Etn arms of the Kennedy pathway. This Sus scrofa (Pig) protein is Choline transporter-like protein 2 (SLC44A2).